We begin with the raw amino-acid sequence, 250 residues long: 2,3-bisphosphoglycerate-dependent phosphoglycerate mutase (250 aa).

Residues 10–17, 23–24, Arg62, 89–92, Lys100, 116–117, and 185–186 each bind substrate; these read RHGESQWN, TG, ERHY, RR, and GN. The active-site Tele-phosphohistidine intermediate is the His11. Catalysis depends on Glu89, which acts as the Proton donor/acceptor.

It belongs to the phosphoglycerate mutase family. BPG-dependent PGAM subfamily. As to quaternary structure, homodimer.

It catalyses the reaction (2R)-2-phosphoglycerate = (2R)-3-phosphoglycerate. Its pathway is carbohydrate degradation; glycolysis; pyruvate from D-glyceraldehyde 3-phosphate: step 3/5. Catalyzes the interconversion of 2-phosphoglycerate and 3-phosphoglycerate. The polypeptide is 2,3-bisphosphoglycerate-dependent phosphoglycerate mutase (Shigella boydii serotype 4 (strain Sb227)).